A 942-amino-acid chain; its full sequence is Leucine--tRNA ligase (942 aa).

The 'HIGH' region signature appears at 41 to 51 (PYLNGVLHAGH). Positions 633 to 637 (KLSKS) match the 'KMSKS' region motif. Lys636 serves as a coordination point for ATP.

The protein belongs to the class-I aminoacyl-tRNA synthetase family.

Its subcellular location is the cytoplasm. It catalyses the reaction tRNA(Leu) + L-leucine + ATP = L-leucyl-tRNA(Leu) + AMP + diphosphate. The sequence is that of Leucine--tRNA ligase from Methanocaldococcus jannaschii (strain ATCC 43067 / DSM 2661 / JAL-1 / JCM 10045 / NBRC 100440) (Methanococcus jannaschii).